Here is a 1389-residue protein sequence, read N- to C-terminus: CRISPR-associated endoribonuclease Cas13a (1389 aa).

An NTD region spans residues 1–347 (MGNLFGHKRW…DKHEKFKIER (347 aa)). Arginine 219 lines the crRNA pocket. 3 binds crRNA regions span residues 330 to 342 (YIKS…KHEK), 405 to 408 (KKHY), and 432 to 436 (YRYLK). The tract at residues 348–498 (ENKKDKIVKF…KLRHNDIDMT (151 aa)) is helical-1. Active-site for pre-crRNA processing residues include arginine 438 and lysine 441. A crRNA-binding site is contributed by lysine 441. Residues 471 to 475 (KILKR) are binds crRNA. Lysine 489 provides a ligand contact to crRNA. The HEPN-like fold 1-I stretch occupies residues 499 to 636 (TVNTDDFSRL…LKISDEEVSK (138 aa)). The tract at residues 502–509 (TDDFSRLH) is binds crRNA. Active-site for target ssRNA cleavage residues include arginine 597 and histidine 602. The segment at 637–828 (ALNLDVVFKD…ERITVKTSDK (192 aa)) is helical-2. A crRNA-binding site is contributed by glutamine 759. The interval 829–899 (TIVINDDFEY…ECITENWNLN (71 aa)) is HEPN-like fold 1-II. The tract at residues 853-858 (NKIRNR) is binds crRNA. Residue tryptophan 865 coordinates crRNA. Coiled-coil stretches lie at residues 893-920 (TENW…FKIQ), 968-1046 (EIDK…FQEI), and 1101-1131 (KNKI…KYIK). Residues 900–1170 (LEEFIQKMKE…EYKKIRDLVE (271 aa)) form a linker region. The tract at residues 1170 to 1290 (EFNYLNKIES…ISHFYIVRNP (121 aa)) is HEPN-like fold 2. Residues arginine 1278 and histidine 1283 each act as for target ssRNA cleavage in the active site. Binds crRNA regions lie at residues 1311 to 1316 (TRYNNS) and 1338 to 1339 (KK).

The protein belongs to the CRISPR-associated endoribonuclease Cas13a family. In terms of assembly, monomer. The cofactor is Mg(2+).

Its activity is regulated as follows. RNase activity on target is decreased by EDTA. Target RNA acts as an activator for non-specific ssRNA degradation. In terms of biological role, CRISPR (clustered regularly interspaced short palindromic repeat), is an adaptive immune system that provides protection against mobile genetic elements (viruses, transposable elements and conjugative plasmids). CRISPR clusters contain sequences complementary to antecedent mobile elements (spacers) and target invading nucleic acids. Unlike many single-component effectors, this CRISPR-Cas system targets RNA. CRISPR clusters are transcribed from pre-CRISPR RNA (crRNA) and processed into crRNA (optimally 28 nucleotides in this system) by this protein. This protein processes pre-crRNA at a 'non-typical' site 1 nucleotide upstream of the pre-crRNA stem-loop; it cleaves pre-crRNA from L.buccalis and L.wadei in a similar fashion, whereas the enzymes from the latter 2 bacteria cleave their own pre-crRNA 3 nt further upstream. When the appropriate target sequences are cloned into the CRISPR array, confers immunity to ssRNA(+) enterobacteria phage MS2. Cleaves linear target ssRNA in a crRNA-dependent fashion, preferentially before U residues; has no activity on partially dsRNA, ssDNA or dsDNA. RNA secondary structure surrounding the target influence the cleavage site and efficiency; unlike other CRISPR-Cas effectors Cas13a cleaves outside of the crRNA binding site. In the presence of a viable RNA target other RNAs are also degraded (called collateral RNA degradation), suggesting this type of CRISPR-Cas might also prevent viral spread by inducing programmed cell death or dormancy. This system has a 3' protospacer flanking site (PFS), it does not cleave when the 3' PFS is G (PFS is equivalent to PAM, the protospacer adjacent motif). Mutations of its active site residues results in an RNA-programmed RNA-binding protein. This chain is CRISPR-associated endoribonuclease Cas13a, found in Leptotrichia shahii (strain DSM 19757 / CCUG 47503 / CIP 107916 / JCM 16776 / LB37).